Here is a 266-residue protein sequence, read N- to C-terminus: UPF0294 protein YafD (266 aa).

The protein belongs to the UPF0294 family.

It localises to the cytoplasm. The protein is UPF0294 protein YafD of Salmonella agona (strain SL483).